The primary structure comprises 805 residues: Angiotensin-converting enzyme 2 (805 aa).

A signal peptide spans methionine 1 to alanine 17. The Extracellular portion of the chain corresponds to glutamine 18–serine 740. A Peptidase M2 domain is found at serine 19–serine 607. Residues aspartate 30–tyrosine 41 form an interaction with SARS-CoV spike glycoprotein region. Asparagine 53 is a glycosylation site (N-linked (GlcNAc...) asparagine). Residues methionine 82–proline 84 are interaction with SARS-CoV spike glycoprotein. N-linked (GlcNAc...) asparagine glycosylation is found at asparagine 90 and asparagine 103. A disulfide bridge links cysteine 133 with cysteine 141. Arginine 169 is a chloride binding site. Substrate is bound at residue arginine 273. N-linked (GlcNAc...) asparagine glycosylation occurs at asparagine 322. Cysteines 344 and 361 form a disulfide. Position 345-346 (histidine 345–proline 346) interacts with substrate. The tract at residues lysine 353–arginine 357 is interaction with SARS-CoV spike glycoprotein. Histidine 374 provides a ligand contact to Zn(2+). The active-site Proton acceptor is glutamate 375. Zn(2+) contacts are provided by histidine 378 and glutamate 402. N-linked (GlcNAc...) asparagine glycosylation is present at asparagine 432. Tryptophan 477 and lysine 481 together coordinate chloride. Residue histidine 505 is the Proton donor of the active site. Residue tyrosine 515 participates in substrate binding. An intrachain disulfide couples cysteine 530 to cysteine 542. Residue asparagine 546 is glycosylated (N-linked (GlcNAc...) asparagine). The Collectrin-like domain maps to alanine 614–phenylalanine 805. Residues arginine 652–lysine 659 are essential for cleavage by ADAM17. Residue asparagine 690 is glycosylated (N-linked (GlcNAc...) asparagine). Positions arginine 697–arginine 716 are essential for cleavage by TMPRSS11D and TMPRSS2. The helical transmembrane segment at isoleucine 741–isoleucine 761 threads the bilayer. Over phenylalanine 762–phenylalanine 805 the chain is Cytoplasmic. The tract at residues asparagine 772 to phenylalanine 805 is disordered. An LIR motif is present at residues glutamate 778 to isoleucine 786. Tyrosine 781 is subject to Phosphotyrosine. The Endocytic sorting signal motif lies at tyrosine 781–isoleucine 784. Positions tyrosine 781–aspartate 785 match the SH2-binding motif. Residue serine 783 is modified to Phosphoserine. Lysine 788 participates in a covalent cross-link: Glycyl lysine isopeptide (Lys-Gly) (interchain with G-Cter in ubiquitin). The segment covering glycine 789–phenylalanine 805 has biased composition (polar residues). The PTB signature appears at asparagine 792 to phenylalanine 795. The PDZ-binding motif lies at threonine 803–phenylalanine 805.

It belongs to the peptidase M2 family. In terms of assembly, homodimer. Interacts with the catalytically active form of TMPRSS2. Interacts with SLC6A19; this interaction is essential for expression and function of SLC6A19 in intestine. Interacts with ITGA5:ITGB1. Probably interacts (via endocytic sorting signal motif) with AP2M1; the interaction is inhibited by phosphorylation of Tyr-781. Interacts (via PDZ-binding motif) with NHERF1 (via PDZ domains); the interaction may enhance ACE2 membrane residence. (Microbial infection) Interacts with SARS coronavirus/SARS-CoV spike protein. As to quaternary structure, (Microbial infection) Interacts with SARS coronavirus-2/SARS-CoV-2 spike protein (via RBD domain). In terms of assembly, (Microbial infection) Interacts with human coronavirus NL63 spike protein. (Microbial infection) Interacts with human coronavirus NL63/HCoV-NL63 spike glycoprotein. As to quaternary structure, (Microbial infection) Interacts with SARS coronavirus-2/SARS-CoV-2 spike protein; the interaction is increased by AVP/Arg-vasopressin with which they may form a complex. It depends on Zn(2+) as a cofactor. Chloride is required as a cofactor. In terms of processing, N-glycosylation on Asn-90 may limit SARS infectivity. Proteolytic cleavage by ADAM17 generates a secreted form. Also cleaved by serine proteases: TMPRSS2, TMPRSS11D and HPN/TMPRSS1. Post-translationally, phosphorylated. Phosphorylation at Tyr-781 probably inhibits interaction with AP2M1 and enables interactions with proteins containing SH2 domains. In terms of processing, ubiquitinated. Ubiquitinated on Lys-788 via 'Lys-48'-linked ubiquitin. 'Lys-48'-linked deubiquitinated by USP50 on the Lys-788; leading to its stabilization. Expressed in endothelial cells from small and large arteries, and in arterial smooth muscle cells (at protein level). Expressed in enterocytes of the small intestine, Leydig cells and Sertoli cells (at protein level). Expressed in the renal proximal tubule and the small intestine (at protein level). Expressed in heart, kidney, testis, and gastrointestinal system (at protein level). In lung, expressed at low levels in some alveolar type 2 cells, the expression seems to be individual-specific (at protein level). Expressed in nasal epithelial cells (at protein level). Coexpressed with TMPRSS2 within some lung alveolar type 2 cells, ileal absorptive enterocytes, intestinal epithelial cells, cornea, gallbladder and nasal goblet secretory cells. Coexpressed with TMPRSS4 within mature enterocytes. As to expression, expressed in nasal and bronchial epithelial cells (at protein level).

The protein resides in the secreted. Its subcellular location is the cell membrane. It is found in the cytoplasm. It localises to the cell projection. The protein localises to the cilium. The protein resides in the apical cell membrane. It carries out the reaction angiotensin II + H2O = angiotensin-(1-7) + L-phenylalanine. The catalysed reaction is angiotensin I + H2O = angiotensin-(1-9) + L-leucine. It catalyses the reaction bradykinin(1-8) + H2O = bradykinin(1-7) + L-phenylalanine. The enzyme catalyses neurotensin + H2O = neurotensin-(1-12) + L-leucine. It carries out the reaction neurotensin-(1-8) + H2O = neurotensin-(1-7) + L-arginine. The catalysed reaction is kinetensin + H2O = kinetensin-(1-8) + L-leucine. It catalyses the reaction dynorphin A-(1-13) + H2O = dynorphin A-(1-12) + L-lysine. The enzyme catalyses apelin-13 + H2O = apelin-12 + L-phenylalanine. It carries out the reaction [Pyr1]apelin-13 + H2O = [Pyr1]apelin-12 + L-phenylalanine. The catalysed reaction is apelin-17 + H2O = apelin-16 + L-phenylalanine. It catalyses the reaction beta-casomorphin-7 + H2O = beta-casomorphin-6 + L-isoleucine. The enzyme catalyses neocasomorphin + H2O = neocasomorphin-(1-5) + L-isoleucine. Regulated by chloride and fluoride, but not bromide. Chloride increases angiotensin I and decreases angiotensin II cleavage. Inhibited by MLN-4760, cFP_Leu, and EDTA, but not by the ACE inhibitors lisinopril, captopril and enalaprilat. Highly potent and selective in vitro ACE2 inhibitors were identified. Essential counter-regulatory carboxypeptidase of the renin-angiotensin hormone system that is a critical regulator of blood volume, systemic vascular resistance, and thus cardiovascular homeostasis. Converts angiotensin I to angiotensin 1-9, a nine-amino acid peptide with anti-hypertrophic effects in cardiomyocytes, and angiotensin II to angiotensin 1-7, which then acts as a beneficial vasodilator and anti-proliferation agent, counterbalancing the actions of the vasoconstrictor angiotensin II. Also removes the C-terminal residue from three other vasoactive peptides, neurotensin, kinetensin, and des-Arg bradykinin, but is not active on bradykinin. Also cleaves other biological peptides, such as apelins (apelin-13, [Pyr1]apelin-13, apelin-17, apelin-36), casomorphins (beta-casomorphin-7, neocasomorphin) and dynorphin A with high efficiency. In addition, ACE2 C-terminus is homologous to collectrin and is responsible for the trafficking of the neutral amino acid transporter SL6A19 to the plasma membrane of gut epithelial cells via direct interaction, regulating its expression on the cell surface and its catalytic activity. In terms of biological role, (Microbial infection) Acts as a receptor for human coronaviruses SARS-CoV and SARS-CoV-2, as well as human coronavirus NL63/HCoV-NL63. Functionally, non-functional as a carboxypeptidase. Its function is as follows. (Microbial infection) Non-functional as a receptor for human coronavirus SARS-CoV-2. The sequence is that of Angiotensin-converting enzyme 2 from Homo sapiens (Human).